A 342-amino-acid polypeptide reads, in one-letter code: Serpentine receptor class beta-16 (342 aa).

The Extracellular portion of the chain corresponds to 1 to 22; it reads MDRELIEICKENSATAFSVGYQ. Residues 23–43 traverse the membrane as a helical segment; it reads IVYLIYVVLSVTSIFTCSYFI. At 44–61 the chain is on the cytoplasmic side; sequence KTFIWNSTFHPNFKLLLT. The helical transmembrane segment at 62 to 82 threads the bilayer; sequence MYFFAAIFHSFLFTASYLMMI. Over 83–102 the chain is Extracellular; that stretch reads ERFLDYQTDCDIHVSMVPYA. A helical transmembrane segment spans residues 103–123; sequence IVHSSIACCLFCGMLTQVFMV. At 124–141 the chain is on the cytoplasmic side; it reads IERLLATIKIESYEHNTS. The chain crosses the membrane as a helical span at residues 142–162; it reads FWHILAYLFFCIVLPLSLLVW. At 163–187 the chain is on the extracellular side; that stretch reads AYQDADYNSPVITAISPPKGVEIRL. Residues 188–208 traverse the membrane as a helical segment; that stretch reads NILYIFCFFLAILALILLQVV. Topologically, residues 209–237 are cytoplasmic; the sequence is RFVNKRRESRIEISLSGRFQIVENIDTTT. Residues 238 to 258 traverse the membrane as a helical segment; it reads FISSILIINMIMSVIYIVGTF. Residues 259–274 lie on the Extracellular side of the membrane; sequence TLRNFQFDAFINNQPA. A helical transmembrane segment spans residues 275–295; it reads LATVKTIFYLHPLFSFLMPLI. Residues 296–342 are Cytoplasmic-facing; the sequence is SSYHLSKMRERRVKRREHLMAIKTKGREGSDAYNQLLHDQWTQHFLK.

The protein belongs to the nematode receptor-like protein srb family. In terms of tissue distribution, expressed throughout the nervous system, in pharyngeal muscle, hermaphrodite vulval muscles and in the male tail. Not expressed in male somatic gonads or sperm.

The protein resides in the cell membrane. It is found in the perikaryon. The protein localises to the cell projection. It localises to the dendrite. G-protein coupled receptor. Plays a role in the navigational capacity of sperm and promotes the targeting of sperm derived from males to the fertilization site in the uterus of hermaphrodites. The sequence is that of Serpentine receptor class beta-16 from Caenorhabditis elegans.